Here is a 255-residue protein sequence, read N- to C-terminus: MPLAKRIIPCLDVCNGRVVKGTKFVDIKDAGDPVEVAKRYDFECADEITFLDITASIEGRDTMIHMVEAIAEQVFIPLTVGGGIRKAVDVRAMLNAGADKVAINSAAIFNPNLINQLSEEFGSQCIVIAIDAKKVSDNKWEIFTHGGRKSTGIDAIEWAVKMTKGDNGAGEVLLTSMDCDGVKTGFDLLLTKAASDAVDVPIIASGGVGNLEHLSEGVLQGGADAVLAASIFHFGEYTIQQAKQAMQENGIEVRL.

Catalysis depends on residues Asp-12 and Asp-131.

Belongs to the HisA/HisF family. As to quaternary structure, heterodimer of HisH and HisF.

It is found in the cytoplasm. The catalysed reaction is 5-[(5-phospho-1-deoxy-D-ribulos-1-ylimino)methylamino]-1-(5-phospho-beta-D-ribosyl)imidazole-4-carboxamide + L-glutamine = D-erythro-1-(imidazol-4-yl)glycerol 3-phosphate + 5-amino-1-(5-phospho-beta-D-ribosyl)imidazole-4-carboxamide + L-glutamate + H(+). It functions in the pathway amino-acid biosynthesis; L-histidine biosynthesis; L-histidine from 5-phospho-alpha-D-ribose 1-diphosphate: step 5/9. IGPS catalyzes the conversion of PRFAR and glutamine to IGP, AICAR and glutamate. The HisF subunit catalyzes the cyclization activity that produces IGP and AICAR from PRFAR using the ammonia provided by the HisH subunit. This chain is Imidazole glycerol phosphate synthase subunit HisF, found in Ruthia magnifica subsp. Calyptogena magnifica.